The following is a 134-amino-acid chain: Large-conductance mechanosensitive channel (134 aa).

2 helical membrane-spanning segments follow: residues 16 to 36 (VIDL…VTAL) and 84 to 104 (INTL…IKVI).

The protein belongs to the MscL family. Homopentamer.

It is found in the cell inner membrane. Channel that opens in response to stretch forces in the membrane lipid bilayer. May participate in the regulation of osmotic pressure changes within the cell. The protein is Large-conductance mechanosensitive channel of Stenotrophomonas maltophilia (strain R551-3).